The following is a 355-amino-acid chain: N6-mAMP deaminase (355 aa).

Positions 13 and 15 each coordinate Zn(2+). N(6)-methyl-AMP contacts are provided by residues His-15, Asn-17, His-65, Thr-97–Lys-100, Asp-160, and Gly-190. His-217 lines the Zn(2+) pocket. Glu-220, Asp-295, and Asp-296 together coordinate N(6)-methyl-AMP. Residue Glu-220 is the Proton donor of the active site. Asp-295 contacts Zn(2+).

The protein belongs to the metallo-dependent hydrolases superfamily. Adenosine and AMP deaminases family. Monomer. Requires Zn(2+) as cofactor.

Its subcellular location is the cytoplasm. It is found in the cytosol. The enzyme catalyses N(6)-methyl-AMP + H2O + H(+) = IMP + methylamine. Functionally, catalyzes the hydrolysis of the free cytosolic methylated adenosine nucleotide N(6)-methyl-AMP (N6-mAMP) to produce inositol monophosphate (IMP) and methylamine. Is required for the catabolism of cytosolic N6-mAMP, which is derived from the degradation of mRNA containing N6-methylated adenine (m6A). Does not possess deaminase activity toward adenosine, AMP, N6-methyladenosine, or N6-mATP in vitro. The sequence is that of N6-mAMP deaminase from Arabidopsis thaliana (Mouse-ear cress).